The primary structure comprises 169 residues: Peptide methionine sulfoxide reductase MsrA (169 aa).

C10 is a catalytic residue.

The protein belongs to the MsrA Met sulfoxide reductase family.

The catalysed reaction is L-methionyl-[protein] + [thioredoxin]-disulfide + H2O = L-methionyl-(S)-S-oxide-[protein] + [thioredoxin]-dithiol. It catalyses the reaction [thioredoxin]-disulfide + L-methionine + H2O = L-methionine (S)-S-oxide + [thioredoxin]-dithiol. Has an important function as a repair enzyme for proteins that have been inactivated by oxidation. Catalyzes the reversible oxidation-reduction of methionine sulfoxide in proteins to methionine. The polypeptide is Peptide methionine sulfoxide reductase MsrA (Streptococcus mutans serotype c (strain ATCC 700610 / UA159)).